The primary structure comprises 76 residues: Defensin-like protein 125 (76 aa).

Residues Met1–Gly25 form the signal peptide. Intrachain disulfides connect Cys30/Cys74, Cys41/Cys60, Cys46/Cys68, and Cys50/Cys70.

Belongs to the DEFL family.

Its subcellular location is the secreted. This is Defensin-like protein 125 (LCR54) from Arabidopsis thaliana (Mouse-ear cress).